Consider the following 213-residue polypeptide: uncharacterized protein (213 aa).

S-adenosyl-L-methionine contacts are provided by Gly-53, Glu-74, and Asp-97.

It belongs to the methyltransferase superfamily. YrrT family.

Functionally, could be a S-adenosyl-L-methionine-dependent methyltransferase. This is an uncharacterized protein from Geobacillus sp. (strain WCH70).